We begin with the raw amino-acid sequence, 476 residues long: MTWETVIGLEIHVQLNTKSKIFSGASTAFGAEPNAHASVVECALPGVLPVMNREVVEKAIKLGLALDAKINQKNVFDRKNYFYPDLPKGYQISQLDLPIVEHGKLEIVVGDDVKTINVTRAHMEEDAGKSVHEGLNGATGIDLNRAGTPLLEVVSEPEMRSAAEAVAYAKALHSLVTWLDICDGNMAEGSFRVDANVSVRPKGQEEFGTRREIKNLNSFRFLEQAINYEAEAQIEILEDGGKVQQATMLFDPEKGETRVMRLKEDAHDYRYFPDPDLLPVIISDAQMQKAKAEMPELPKEMAARFVADYGVSEYDARLLTASRAQAAYFEEAAKESGQGKLTANWMNGELAAALNKEGMELADSPITAPRLAALVGKIADGTLSSKLAKKAFEAMWAEPEATIAEIIEKHGLQQMTDTGEIEAMVDEVLANNAKAVEQFKSGNEKALNAIVGQVMKASKGKANPAQVQELIKAKLA.

The protein belongs to the GatB/GatE family. GatB subfamily. As to quaternary structure, heterotrimer of A, B and C subunits.

The catalysed reaction is L-glutamyl-tRNA(Gln) + L-glutamine + ATP + H2O = L-glutaminyl-tRNA(Gln) + L-glutamate + ADP + phosphate + H(+). It catalyses the reaction L-aspartyl-tRNA(Asn) + L-glutamine + ATP + H2O = L-asparaginyl-tRNA(Asn) + L-glutamate + ADP + phosphate + 2 H(+). Functionally, allows the formation of correctly charged Asn-tRNA(Asn) or Gln-tRNA(Gln) through the transamidation of misacylated Asp-tRNA(Asn) or Glu-tRNA(Gln) in organisms which lack either or both of asparaginyl-tRNA or glutaminyl-tRNA synthetases. The reaction takes place in the presence of glutamine and ATP through an activated phospho-Asp-tRNA(Asn) or phospho-Glu-tRNA(Gln). The sequence is that of Aspartyl/glutamyl-tRNA(Asn/Gln) amidotransferase subunit B from Neisseria meningitidis serogroup B (strain ATCC BAA-335 / MC58).